The primary structure comprises 666 residues: Translation factor guf1, mitochondrial (666 aa).

The transit peptide at 1–44 (MRGCLQLGRWLSAAPRCQAASLRPPTVFPSYRYNRSFSTTTIYY) directs the protein to the mitochondrion. A tr-type G domain is found at 68-248 (ERFRNFCIVA…TVVEKVPAPI (181 aa)). Residues 77 to 84 (AHVDHGKS), 141 to 145 (DTPGH), and 195 to 198 (NKVD) contribute to the GTP site.

The protein belongs to the TRAFAC class translation factor GTPase superfamily. Classic translation factor GTPase family. LepA subfamily.

The protein localises to the mitochondrion inner membrane. It catalyses the reaction GTP + H2O = GDP + phosphate + H(+). Promotes mitochondrial protein synthesis. May act as a fidelity factor of the translation reaction, by catalyzing a one-codon backward translocation of tRNAs on improperly translocated ribosomes. Binds to mitochondrial ribosomes in a GTP-dependent manner. The polypeptide is Translation factor guf1, mitochondrial (guf1) (Penicillium rubens (strain ATCC 28089 / DSM 1075 / NRRL 1951 / Wisconsin 54-1255) (Penicillium chrysogenum)).